We begin with the raw amino-acid sequence, 142 residues long: UPF0102 protein Bamb_0202 (142 aa).

The interval 1-23 is disordered; it reads MCHAAPAAPASGRGLPHGGGNFS.

This sequence belongs to the UPF0102 family.

The protein is UPF0102 protein Bamb_0202 of Burkholderia ambifaria (strain ATCC BAA-244 / DSM 16087 / CCUG 44356 / LMG 19182 / AMMD) (Burkholderia cepacia (strain AMMD)).